The following is a 994-amino-acid chain: Transposase for transposon Tn2501 (994 aa).

It belongs to the transposase 7 family.

In terms of biological role, required for transposition of transposon Tn2501. The chain is Transposase for transposon Tn2501 (tnpA) from Escherichia coli.